A 76-amino-acid polypeptide reads, in one-letter code: ATP synthase subunit 9, mitochondrial (76 aa).

Met1 bears the N-formylmethionine mark. 2 helical membrane-spanning segments follow: residues 14-34 (LASI…AALI) and 52-72 (ILGF…AFLL).

In terms of assembly, F-type ATP synthases have 2 components, the catalytic core F(1) and the membrane-embedded component F(0), linked together by a central stalk and a peripheral stalk. The central stalk, also called rotor shaft, is often seen as part of F(1). The peripheral stalk is seen as part of F(0). F(0) contains the membrane channel next to the rotor. F-type ATP synthases form dimers but each monomer functions independently in ATP generation. The dimer consists of 17 different polypeptides: ATP1 (subunit alpha, 3 molecules per monomer, part of F(1)), ATP2 (subunit beta, 3 copies per monomer, part of F(1)), ATP3 (subunit gamma, part of the central stalk), ATP4 (subunit b, part of the peripheral stalk), ATP5/OSCP (subunit 5/OSCP, part of the peripheral stalk), ATP6 (subunit a, part of the peripheral stalk), ATP7 (subunit d, part of the peripheral stalk), ATP8 (subunit 8, part of the peripheral stalk), OLI1 (subunit c, part of the rotor, 10 molecules per monomer), ATP14 (subunit h, part of the peripheral stalk), ATP15 (subunit epsilon, part of the central stalk), ATP16 (subunit delta, part of the central stalk), ATP17 (subunit f, part of the peripheral stalk), ATP18 (subunit i/j, part of the peripheral stalk), ATP19 (subunit k, dimer-specific, at interface between monomers), ATP20 (subunit g, at interface between monomers), TIM11 (subunit e, at interface between monomers).

The protein resides in the mitochondrion inner membrane. Mitochondrial membrane ATP synthase (F(1)F(0) ATP synthase or Complex V) produces ATP from ADP in the presence of a proton gradient across the membrane which is generated by electron transport complexes of the respiratory chain. F-type ATP synthases consist of two structural domains, F(1) - containing the extramembraneous catalytic core, and F(0) - containing the membrane proton channel, linked together by a central stalk and a peripheral stalk. During catalysis, ATP synthesis in the catalytic domain of F(1) is coupled via a rotary mechanism of the central stalk subunits to proton translocation. Part of the complex F(0) domain. A homomeric c-ring of 10 OLI1/ATP9 subunits is part of the complex rotary element. The protein is ATP synthase subunit 9, mitochondrial of Yarrowia lipolytica (strain CLIB 122 / E 150) (Yeast).